The sequence spans 273 residues: Homeobox protein HMX2 (273 aa).

A disordered region spans residues Met-1–Thr-154. Over residues Pro-114–Leu-123 the composition is skewed to basic and acidic residues. Residues Lys-149 to Leu-208 constitute a DNA-binding region (homeobox).

The protein belongs to the HMX homeobox family. Expressed in the developing CNS, including a specific expression in vestibular structures throughout inner ear development.

It localises to the nucleus. Functionally, transcription factor involved in specification of neuronal cell types and which is required for inner ear and hypothalamus development. The chain is Homeobox protein HMX2 (Hmx2) from Mus musculus (Mouse).